A 209-amino-acid chain; its full sequence is Small ribosomal subunit protein uS4 (209 aa).

The tract at residues 23-46 is disordered; it reads SRNPLLKKPHPPGQHGMQRKKKSD. Residues 93-156 enclose the S4 RNA-binding domain; sequence CRLDNMVYRM…RKLQSVQESL (64 aa).

This sequence belongs to the universal ribosomal protein uS4 family. Part of the 30S ribosomal subunit. Contacts protein S5. The interaction surface between S4 and S5 is involved in control of translational fidelity.

Functionally, one of the primary rRNA binding proteins, it binds directly to 16S rRNA where it nucleates assembly of the body of the 30S subunit. In terms of biological role, with S5 and S12 plays an important role in translational accuracy. This Chlamydia caviae (strain ATCC VR-813 / DSM 19441 / 03DC25 / GPIC) (Chlamydophila caviae) protein is Small ribosomal subunit protein uS4.